Consider the following 205-residue polypeptide: Ras-related protein Rab-1A (205 aa).

GTP contacts are provided by residues 18 to 26 (GDSGVGKSC), 36 to 43 (YTESYIST), 66 to 70 (DTAGQ), 124 to 127 (NKSD), and 154 to 156 (SAK). Residues 40–48 (YISTIGVDF) carry the Effector region motif. Positions 183–198 (SDSKPSVKINSSTPVS) are enriched in polar residues. Residues 183–205 (SDSKPSVKINSSTPVSANKGGCC) form a disordered region. Residues Cys-204 and Cys-205 are each lipidated (S-geranylgeranyl cysteine).

The protein belongs to the small GTPase superfamily. Rab family.

It is found in the golgi apparatus. The protein resides in the endoplasmic reticulum. In terms of biological role, probably required for transit of protein from the ER through Golgi compartment. This Lymnaea stagnalis (Great pond snail) protein is Ras-related protein Rab-1A (RAB1A).